The primary structure comprises 205 residues: MYQIPVLSPSGRRELAADLPAEINPHLLWEVVRWQLAKRRRGTASTKTRGEVAYSGRKIWPQKHTGRARHGDIGAPIFVGGGVVFGPKPRDYSYTLPKKVRKKGLAMAVADRAREGKLLLVEAFAGVNGKTKEFLAWAKEAGLDGSESVLLVTGNELVRRAARNLPWVVTLAPEGLNVYDIVRTERLVMDLDAWEVFQNRIGGEA.

Belongs to the universal ribosomal protein uL4 family. As to quaternary structure, part of the 50S ribosomal subunit.

In terms of biological role, one of the primary rRNA binding proteins, this protein initially binds near the 5'-end of the 23S rRNA. It is important during the early stages of 50S assembly. It makes multiple contacts with different domains of the 23S rRNA in the assembled 50S subunit and ribosome. Functionally, forms part of the polypeptide exit tunnel. The protein is Large ribosomal subunit protein uL4 of Thermus thermophilus (strain ATCC BAA-163 / DSM 7039 / HB27).